The following is a 243-amino-acid chain: Coproheme decarboxylase (243 aa).

The active site involves Tyr-145. Residue His-168 participates in Fe-coproporphyrin III binding.

It belongs to the ChdC family. Type 2 subfamily. Fe-coproporphyrin III serves as cofactor.

It carries out the reaction Fe-coproporphyrin III + 2 H2O2 + 2 H(+) = heme b + 2 CO2 + 4 H2O. The catalysed reaction is Fe-coproporphyrin III + H2O2 + H(+) = harderoheme III + CO2 + 2 H2O. The enzyme catalyses harderoheme III + H2O2 + H(+) = heme b + CO2 + 2 H2O. It functions in the pathway porphyrin-containing compound metabolism; protoheme biosynthesis. Its function is as follows. Involved in coproporphyrin-dependent heme b biosynthesis. Catalyzes the decarboxylation of Fe-coproporphyrin III (coproheme) to heme b (protoheme IX), the last step of the pathway. The reaction occurs in a stepwise manner with a three-propionate intermediate. The sequence is that of Coproheme decarboxylase from Streptomyces coelicolor (strain ATCC BAA-471 / A3(2) / M145).